We begin with the raw amino-acid sequence, 327 residues long: GMP reductase (327 aa).

C176 acts as the Thioimidate intermediate in catalysis. 205-228 is a binding site for NADP(+); sequence IIADGGIRTHGDIAKSIRFGASMV.

This sequence belongs to the IMPDH/GMPR family. GuaC type 2 subfamily.

It carries out the reaction IMP + NH4(+) + NADP(+) = GMP + NADPH + 2 H(+). Catalyzes the irreversible NADPH-dependent deamination of GMP to IMP. It functions in the conversion of nucleobase, nucleoside and nucleotide derivatives of G to A nucleotides, and in maintaining the intracellular balance of A and G nucleotides. In Streptococcus pyogenes serotype M6 (strain ATCC BAA-946 / MGAS10394), this protein is GMP reductase.